A 452-amino-acid chain; its full sequence is Keratin, type I cytoskeletal 42 (452 aa).

Residues 4–93 (TTSVRQFSTS…GVSDALLGGS (90 aa)) form a head region. Residues 94–129 (EKETMQNLNDRLATYLDRVRALEEANADLEVKIREW) form a coil 1A region. One can recognise an IF rod domain in the interval 94–405 (EKETMQNLND…RLLEGEDAHL (312 aa)). Residues 130 to 147 (YKKQGPGPARDYSPYFKT) are linker 1. The segment at 148-239 (IEDLRNKILA…KNHEEEMNAL (92 aa)) is coil 1B. The tract at residues 240 to 262 (RGQVGGDVNVEMDAAPGVDLSRI) is linker 12. Residues 263–401 (LNEMRDQYEK…ATYRRLLEGE (139 aa)) are coil 2. The segment at 402–452 (DAHLATQYSSSLASQPSREGMVTSRQVRTIVEEVQDGKVVSSREQVHRSTH) is tail.

This sequence belongs to the intermediate filament family. Heterodimer of a type I and a type II keratin. Colocalizes with KRT8/KRT18 filament network. Expressed in nail matrix and nail bed epithelium (at protein level). Also expressed in tongue and digits with weak expression in vibrissae and in both filiform and fungiform papillae of oral mucosa.

It is found in the cytoplasm. The protein is Keratin, type I cytoskeletal 42 of Mus musculus (Mouse).